We begin with the raw amino-acid sequence, 932 residues long: Glycine dehydrogenase (decarboxylating) (932 aa).

Residue lysine 685 is modified to N6-(pyridoxal phosphate)lysine.

Belongs to the GcvP family. As to quaternary structure, the glycine cleavage system is composed of four proteins: P, T, L and H. Pyridoxal 5'-phosphate is required as a cofactor.

It carries out the reaction N(6)-[(R)-lipoyl]-L-lysyl-[glycine-cleavage complex H protein] + glycine + H(+) = N(6)-[(R)-S(8)-aminomethyldihydrolipoyl]-L-lysyl-[glycine-cleavage complex H protein] + CO2. Functionally, the glycine cleavage system catalyzes the degradation of glycine. The P protein binds the alpha-amino group of glycine through its pyridoxal phosphate cofactor; CO(2) is released and the remaining methylamine moiety is then transferred to the lipoamide cofactor of the H protein. The polypeptide is Glycine dehydrogenase (decarboxylating) (Brucella melitensis biotype 1 (strain ATCC 23456 / CCUG 17765 / NCTC 10094 / 16M)).